The chain runs to 82 residues: EMBRYO SURROUNDING FACTOR 1.2 (82 aa).

An N-terminal signal peptide occupies residues 1-23 (MKSQTVLISIFIFSFFALHQCMQ). Cystine bridges form between cysteine 40/cysteine 56, cysteine 45/cysteine 77, cysteine 54/cysteine 71, and cysteine 57/cysteine 64.

It belongs to the MEG family. Expressed exclusively in ovule embryo sacs and in early developing endosperms.

Functionally, maternally-contributed central cell peptide regulating suspensor development and correct auxin distribution in early developing embryos. This Arabidopsis thaliana (Mouse-ear cress) protein is EMBRYO SURROUNDING FACTOR 1.2 (ESF1.2).